We begin with the raw amino-acid sequence, 709 residues long: Protein transport protein SEC39 (709 aa).

This sequence belongs to the SEC39 family. Component of a peripheral membrane protein complex consisting of DSL1, SEC39/DSL3 and TIP20. Bound to a SNARE complex consisting of UFE1, USE1, SEC20 and SEC22 or YKT6 through direct interaction of TIP20 with SEC20. Interacts with TIP20 and DSL1.

It is found in the endoplasmic reticulum membrane. In terms of biological role, required for protein transport between the Golgi and the endoplasmic reticulum. May contribute to tethering of coatomer-coated retrograde transport vesicles to the ER membrane through interaction with and stabilization of the SNARE complex. This is Protein transport protein SEC39 from Saccharomyces cerevisiae (strain ATCC 204508 / S288c) (Baker's yeast).